Reading from the N-terminus, the 1584-residue chain is Dicer-like protein 1 (1584 aa).

The disordered stretch occupies residues 31–60 (EDVVSDNDDRGNASDVESEDGVKRWTVNPE). Residues 129-310 (LFERAKQQNT…RAAAELEALL (182 aa)) enclose the Helicase ATP-binding domain. Position 142–149 (142–149 (LDTGSGKT)) interacts with ATP. A DEAH box motif is present at residues 255-258 (DEAH). The 174-residue stretch at 448 to 621 (KVIMLVRILR…EALPEDRKLT (174 aa)) folds into the Helicase C-terminal domain. The region spanning 654–744 (SLVCLANFTA…QSVFTKQLPE (91 aa)) is the Dicer dsRNA-binding fold domain. The PAZ domain maps to 894 to 1028 (KALAYVSENE…LILEPMRISP (135 aa)). 2 consecutive RNase III domains span residues 1052 to 1207 (VALD…LTGQ) and 1258 to 1424 (AKKF…VDSE). Residues E1298, D1410, and E1413 each contribute to the Mg(2+) site. The region spanning 1458–1545 (TFVANMMAHK…AKKAIKLLEG (88 aa)) is the DRBM domain. Residues C1470, H1516, C1557, and C1559 each contribute to the Zn(2+) site.

This sequence belongs to the helicase family. Dicer subfamily. Mg(2+) is required as a cofactor. Mn(2+) serves as cofactor.

Functionally, dicer-like endonuclease involved in cleaving double-stranded RNA in the RNA interference (RNAi) pathway. Produces 21 to 25 bp dsRNAs (siRNAs) which target the selective destruction of homologous RNAs leading to sequence-specific suppression of gene expression, called post-transcriptional gene silencing (PTGS). Part of a broad host defense response against viral infection and transposons. Controls the expression of the non-LTR retrotransposon Tad in the African strain, Adiomopoume. The protein is Dicer-like protein 1 (dcl-1) of Neurospora crassa (strain ATCC 24698 / 74-OR23-1A / CBS 708.71 / DSM 1257 / FGSC 987).